We begin with the raw amino-acid sequence, 123 residues long: PTS system glucitol/sorbitol-specific EIIA component (123 aa).

Residues 1 to 116 form the PTS EIIA type-5 domain; it reads MTVIYQTTIT…PDDIAPGSVL (116 aa). The active-site Tele-phosphohistidine intermediate is H43. H43 carries the post-translational modification Phosphohistidine; by HPr.

It localises to the cytoplasm. Its function is as follows. The phosphoenolpyruvate-dependent sugar phosphotransferase system (sugar PTS), a major carbohydrate active transport system, catalyzes the phosphorylation of incoming sugar substrates concomitantly with their translocation across the cell membrane. The enzyme II complex composed of SrlA, SrlB and SrlE is involved in glucitol/sorbitol transport. This chain is PTS system glucitol/sorbitol-specific EIIA component (srlB), found in Shigella flexneri.